Here is a 232-residue protein sequence, read N- to C-terminus: Triosephosphate isomerase (232 aa).

6–8 (NLK) contributes to the substrate binding site. The active-site Electrophile is the histidine 91. The active-site Proton acceptor is glutamate 158. Residues glycine 164 and serine 194 each contribute to the substrate site.

It belongs to the triosephosphate isomerase family. Homodimer.

It localises to the cytoplasm. It carries out the reaction D-glyceraldehyde 3-phosphate = dihydroxyacetone phosphate. It functions in the pathway carbohydrate biosynthesis; gluconeogenesis. The protein operates within carbohydrate degradation; glycolysis; D-glyceraldehyde 3-phosphate from glycerone phosphate: step 1/1. Involved in the gluconeogenesis. Catalyzes stereospecifically the conversion of dihydroxyacetone phosphate (DHAP) to D-glyceraldehyde-3-phosphate (G3P). In Campylobacter hominis (strain ATCC BAA-381 / DSM 21671 / CCUG 45161 / LMG 19568 / NCTC 13146 / CH001A), this protein is Triosephosphate isomerase.